The sequence spans 80 residues: Acyl carrier protein (80 aa).

The 76-residue stretch at 2–77 (KNIEERIKKI…KSIDFIQNKN (76 aa)) folds into the Carrier domain. S37 is modified (O-(pantetheine 4'-phosphoryl)serine).

It belongs to the acyl carrier protein (ACP) family. 4'-phosphopantetheine is transferred from CoA to a specific serine of apo-ACP by AcpS. This modification is essential for activity because fatty acids are bound in thioester linkage to the sulfhydryl of the prosthetic group.

The protein localises to the cytoplasm. Its pathway is lipid metabolism; fatty acid biosynthesis. Its function is as follows. Carrier of the growing fatty acid chain in fatty acid biosynthesis. This chain is Acyl carrier protein, found in Buchnera aphidicola subsp. Acyrthosiphon pisum (strain 5A).